The chain runs to 306 residues: Recombination-associated protein RdgC (306 aa).

Belongs to the RdgC family.

The protein resides in the cytoplasm. The protein localises to the nucleoid. Functionally, may be involved in recombination. The chain is Recombination-associated protein RdgC from Pseudomonas aeruginosa (strain ATCC 15692 / DSM 22644 / CIP 104116 / JCM 14847 / LMG 12228 / 1C / PRS 101 / PAO1).